A 428-amino-acid polypeptide reads, in one-letter code: RNA-binding protein 34 (428 aa).

2 disordered regions span residues 1–106 (MALR…KVKV) and 127–152 (DLEE…TDGE). At Lys147 the chain carries N6-acetyllysine. RRM domains lie at 183–278 (RTVF…LASE) and 285–362 (RSVF…RSVN). Lys240 participates in a covalent cross-link: Glycyl lysine isopeptide (Lys-Gly) (interchain with G-Cter in SUMO2). At Ser286 the chain carries Phosphoserine. The segment at 361–428 (VNKEKLKQQN…GQTKKPRKQK (68 aa)) is disordered. A compositionally biased stretch (basic residues) spans 408-428 (LMKKKKGQKKKGQTKKPRKQK).

This sequence belongs to the RRM RBM34 family.

It is found in the nucleus. It localises to the nucleolus. The sequence is that of RNA-binding protein 34 (Rbm34) from Rattus norvegicus (Rat).